Here is a 712-residue protein sequence, read N- to C-terminus: Polyribonucleotide nucleotidyltransferase (712 aa).

Mg(2+) contacts are provided by Asp-493 and Asp-499. Residues 560–619 (PRLLTFKVDPEDIGKIIGPGGKTVRGITEATGAKVDISDDGTITVSSSVGGQAEAARAMI) enclose the KH domain. Residues 629–697 (GQVYLGKVTR…HKGRINLTRL (69 aa)) enclose the S1 motif domain.

Belongs to the polyribonucleotide nucleotidyltransferase family. Mg(2+) serves as cofactor.

Its subcellular location is the cytoplasm. The catalysed reaction is RNA(n+1) + phosphate = RNA(n) + a ribonucleoside 5'-diphosphate. Functionally, involved in mRNA degradation. Catalyzes the phosphorolysis of single-stranded polyribonucleotides processively in the 3'- to 5'-direction. This chain is Polyribonucleotide nucleotidyltransferase, found in Synechococcus sp. (strain JA-2-3B'a(2-13)) (Cyanobacteria bacterium Yellowstone B-Prime).